The chain runs to 317 residues: 3'-5' exoribonuclease YhaM (317 aa).

The OB DNA-binding region spans F17–S90. Residues H163–K279 form the HD domain.

Belongs to the YhaM family.

Functionally, shows a 3'-5' exoribonuclease activity. In Oceanobacillus iheyensis (strain DSM 14371 / CIP 107618 / JCM 11309 / KCTC 3954 / HTE831), this protein is 3'-5' exoribonuclease YhaM.